A 249-amino-acid chain; its full sequence is Type III pantothenate kinase (249 aa).

6–13 (DAGNSRIK) is a binding site for ATP. Substrate contacts are provided by residues phenylalanine 77 and 98–101 (GVDR). Aspartate 100 functions as the Proton acceptor in the catalytic mechanism. Aspartate 121 contributes to the K(+) binding site. Position 124 (serine 124) interacts with ATP. Threonine 177 is a binding site for substrate.

This sequence belongs to the type III pantothenate kinase family. Homodimer. The cofactor is NH4(+). K(+) serves as cofactor.

The protein resides in the cytoplasm. It carries out the reaction (R)-pantothenate + ATP = (R)-4'-phosphopantothenate + ADP + H(+). The protein operates within cofactor biosynthesis; coenzyme A biosynthesis; CoA from (R)-pantothenate: step 1/5. Catalyzes the phosphorylation of pantothenate (Pan), the first step in CoA biosynthesis. This Teredinibacter turnerae (strain ATCC 39867 / T7901) protein is Type III pantothenate kinase.